The following is a 157-amino-acid chain: Glutamyl-tRNA(Gln) amidotransferase subunit C, mitochondrial (157 aa).

This sequence belongs to the GatC family. In terms of assembly, subunit of the heterotrimeric GatCAB amidotransferase (AdT) complex, composed of A, B and C subunits.

Its subcellular location is the mitochondrion. It carries out the reaction L-glutamyl-tRNA(Gln) + L-glutamine + ATP + H2O = L-glutaminyl-tRNA(Gln) + L-glutamate + ADP + phosphate + H(+). Allows the formation of correctly charged Gln-tRNA(Gln) through the transamidation of misacylated Glu-tRNA(Gln) in the mitochondria. The reaction takes place in the presence of glutamine and ATP through an activated gamma-phospho-Glu-tRNA(Gln). This chain is Glutamyl-tRNA(Gln) amidotransferase subunit C, mitochondrial, found in Drosophila virilis (Fruit fly).